A 276-amino-acid chain; its full sequence is Phospholipid phosphatase 2 (276 aa).

Residues 1-4 (MERR) lie on the Cytoplasmic side of the membrane. The helical transmembrane segment at 5–25 (WVFVLLDVLCVLVASLPFIIL) threads the bilayer. The Lumenal segment spans residues 26 to 51 (TLVNAPYKRGFYCGDDSIRYPYRPDT). The helical transmembrane segment at 52-72 (ITHGLMAGVIITATVVLVSSG) threads the bilayer. Topologically, residues 73–87 (EAYLVYTDRLYSRSD) are cytoplasmic. The helical transmembrane segment at 88-108 (FNNYVAAIYKVLGTFLFGAAV) threads the bilayer. The Lumenal portion of the chain corresponds to 109–161 (SQSLTDLAKYMIGRLRPSFLAVCDPDWSRVNCSGYVQVEVCRGSPANVTEARL). The segment at 117 to 125 (KYMIGRLRP) is phosphatase sequence motif I. 2 N-linked (GlcNAc...) asparagine glycosylation sites follow: Asn-139 and Asn-155. Residues 162–182 (SFYSGHSSFGMYCMLFLALYV) traverse the membrane as a helical segment. A phosphatase sequence motif II region spans residues 164–167 (YSGH). Residue His-167 is the Proton donors of the active site. Residues 183–189 (QARLCWK) are Cytoplasmic-facing. A helical membrane pass occupies residues 190-210 (WARLLRPTVQFFLVAFAIYVG). Residues 211–225 (YTRVSDNKHHWSDVL) lie on the Lumenal side of the membrane. The tract at residues 212–223 (TRVSDNKHHWSD) is phosphatase sequence motif III. His-219 (nucleophile) is an active-site residue. The helical transmembrane segment at 226–246 (VGLLQGALVACLTVCYVSDFF) threads the bilayer. At 247 to 276 (KSRPPQSCQENEESERKPSLSLTLTLGDRP) the chain is on the cytoplasmic side. A disordered region spans residues 252-276 (QSCQENEESERKPSLSLTLTLGDRP).

The protein belongs to the PA-phosphatase related phosphoesterase family. Forms functional homodimers and homooligomers. Can also form heterooligomers with PLPP1 and PLPP3. Post-translationally, N-glycosylated. As to expression, expressed in the brain.

It localises to the membrane. The protein resides in the cell membrane. The protein localises to the early endosome membrane. Its subcellular location is the endoplasmic reticulum membrane. It carries out the reaction a 1,2-diacyl-sn-glycero-3-phosphate + H2O = a 1,2-diacyl-sn-glycerol + phosphate. It catalyses the reaction 1,2-dihexadecanoyl-sn-glycero-3-phosphate + H2O = 1,2-dihexadecanoyl-sn-glycerol + phosphate. The catalysed reaction is 1,2-di-(9Z-octadecenoyl)-sn-glycero-3-phosphate + H2O = 1,2-di-(9Z-octadecenoyl)-sn-glycerol + phosphate. The enzyme catalyses a monoacyl-sn-glycero-3-phosphate + H2O = a monoacylglycerol + phosphate. It carries out the reaction (9Z)-octadecenoyl-sn-glycero-3-phosphate + H2O = (9Z-octadecenoyl)-glycerol + phosphate. It catalyses the reaction sphing-4-enine 1-phosphate + H2O = sphing-4-enine + phosphate. The catalysed reaction is an N-acylsphing-4-enine 1-phosphate + H2O = an N-acylsphing-4-enine + phosphate. The enzyme catalyses N-(octanoyl)-sphing-4-enine-1-phosphate + H2O = N-octanoylsphing-4-enine + phosphate. It carries out the reaction N-(9Z-octadecenoyl)-ethanolamine phosphate + H2O = N-(9Z-octadecenoyl) ethanolamine + phosphate. The protein operates within lipid metabolism; phospholipid metabolism. With respect to regulation, magnesium-independent phospholipid phosphatase. Insensitive to N-ethylmaleimide. Functionally, magnesium-independent phospholipid phosphatase that catalyzes the dephosphorylation of a variety of glycerolipid and sphingolipid phosphate esters including phosphatidate/PA, lysophosphatidate/LPA, sphingosine 1-phosphate/S1P and ceramide 1-phosphate/C1P. Has no apparent extracellular phosphatase activity and therefore most probably acts intracellularly. Also acts on N-oleoyl ethanolamine phosphate/N-(9Z-octadecenoyl)-ethanolamine phosphate, a potential physiological compound. Through dephosphorylation of these bioactive lipid mediators produces new bioactive compounds and may regulate signal transduction in different cellular processes. Indirectly regulates, for instance, cell cycle G1/S phase transition through its phospholipid phosphatase activity. The polypeptide is Phospholipid phosphatase 2 (Rattus norvegicus (Rat)).